We begin with the raw amino-acid sequence, 3029 residues long: Polycystin-1-related protein (3029 aa).

The first 21 residues, 1 to 21 (MAKHLYLAFSLILVPFLVSKA), serve as a signal peptide directing secretion. Residues 22 to 1685 (KQTSNGEVPW…RDTDKLKNSP (1664 aa)) lie on the Extracellular side of the membrane. The 93-residue stretch at 29 to 121 (VPWLVGCYRY…KNVASVYSTA (93 aa)) folds into the WSC domain. 2 PKD domains span residues 364-450 (EGHC…IKGV) and 546-634 (DHLF…PECY). Positions 633 to 1476 (CYTRGVAIVG…NPYFSDMNHT (844 aa)) constitute an REJ domain. 3 disordered regions span residues 754–773 (RKGP…HPDE), 909–931 (CPSD…SNSP), and 989–1051 (TSAI…PNKP). Over residues 918–931 (VTPSTTPMTDSNSP) the composition is skewed to polar residues. A compositionally biased stretch (acidic residues) spans 997–1013 (SGDVDDDEVNNDNDDDS). Over residues 1020 to 1047 (TLPTPLSMTNANSVNKPIITTDTPSFNK) the composition is skewed to polar residues. The GAIN-B domain occupies 1525-1671 (RNVHVINQTA…GFIQPPNSLH (147 aa)). 2 disulfide bridges follow: Cys-1624–Cys-1651 and Cys-1639–Cys-1653. The segment at 1624-1671 (CFYWNKRGKHWASDGCRLEKSINHTLVCRCNHLTAFSGGFIQPPNSLH) is GPS. A helical membrane pass occupies residues 1686-1706 (LTMVLVISILVMYFLLLGFCV). At 1707–1895 (KADRHDKKKL…SYSRFTRAQR (189 aa)) the chain is on the cytoplasmic side. The PLAT domain occupies 1733–1851 (SRFQLSVQTG…GNGKVECELF (119 aa)). The helical transmembrane segment at 1896 to 1916 (LSCCLSLLLSFLCVNIAWYRP) threads the bilayer. Residues 1917–1933 (KIEVTEVLGVLDVSANS) lie on the Extracellular side of the membrane. A helical membrane pass occupies residues 1934 to 1954 (IMIGVLGSLMVLPVNFLWIFF). Topologically, residues 1955–2101 (FRYSRRSLSR…YRSKFSLPHG (147 aa)) are cytoplasmic. Residues 2102–2122 (FVYVAWFGCLITGTVTSAITI) traverse the membrane as a helical segment. The Extracellular segment spans residues 2123–2140 (WYGLSFGWDLSVHWFQSL). A helical membrane pass occupies residues 2141-2161 (VFSLLESLLLSQPIMVLAFIF). At 2162–2250 (YMSHKTKSGK…SLKNRVLRNY (89 aa)) the chain is on the cytoplasmic side. Residues 2251–2271 (VVELFVFIMFFVVTCALVFSV) form a helical membrane-spanning segment. The Extracellular portion of the chain corresponds to 2272–2462 (ADPDVYHLNQ…GYSYFIRFTK (191 aa)). The helical transmembrane segment at 2463–2483 (LLFVVFFLYLLQHEFFLALKM) threads the bilayer. Over 2484–2496 (TFSYFTNFWRVYQ) the chain is Cytoplasmic. Residues 2497-2517 (LLTIAISSACIVSYIHWSLSL) traverse the membrane as a helical segment. Residues 2518–2538 (YALLREVETERQSRVFYLSRQ) lie on the Extracellular side of the membrane. Residues 2539–2559 (ISWSQGFLQASYSLLLFLLLI) traverse the membrane as a helical segment. Topologically, residues 2560 to 2586 (RCLHLLRPFRFVRHFGRILSTSISSLL) are cytoplasmic. A helical membrane pass occupies residues 2587–2607 (ACWVFGFILVVAFAHPGYLLF). The Extracellular segment spans residues 2608–2651 (GSVHSSFKSFGDAFLLVTSFFRLEGVARYQDFALEEQTLLLSTY). The chain crosses the membrane as a helical span at residues 2652–2672 (FALFLIGFCVIVRGSTAAVVL). Topologically, residues 2673–3029 (HGIRCLGKRR…PVGQRVVSAM (357 aa)) are cytoplasmic. The tract at residues 2704 to 2726 (KKPKKPRPNSVSDLEETDDEDDL) is disordered. Over residues 2716–2726 (DLEETDDEDDL) the composition is skewed to acidic residues.

The protein belongs to the polycystin family. As to quaternary structure, heterodimer of 2 chains generated by proteolytic processing; the large extracellular N-terminal fragment and the membrane-bound C-terminal fragment predominantly remain associated and non-covalently linked. In terms of processing, autoproteolytically processed at the GPS region of the GAIN-B domain; this cleavage modulates receptor activity. In terms of tissue distribution, component of the acid-insoluble and acid-soluble organic matrix of the aragonitic skeleton (at protein level).

It localises to the membrane. This chain is Polycystin-1-related protein, found in Acropora millepora (Staghorn coral).